A 259-amino-acid polypeptide reads, in one-letter code: Phosphoadenosine 5'-phosphosulfate reductase (259 aa).

The active-site Nucleophile; cysteine thiosulfonate intermediate is cysteine 244.

The protein belongs to the PAPS reductase family. CysH subfamily.

It localises to the cytoplasm. The enzyme catalyses [thioredoxin]-disulfide + sulfite + adenosine 3',5'-bisphosphate + 2 H(+) = [thioredoxin]-dithiol + 3'-phosphoadenylyl sulfate. It participates in sulfur metabolism; hydrogen sulfide biosynthesis; sulfite from sulfate: step 3/3. In terms of biological role, catalyzes the formation of sulfite from phosphoadenosine 5'-phosphosulfate (PAPS) using thioredoxin as an electron donor. The protein is Phosphoadenosine 5'-phosphosulfate reductase of Vibrio parahaemolyticus serotype O3:K6 (strain RIMD 2210633).